We begin with the raw amino-acid sequence, 88 residues long: UPF0335 protein M446_5200 (88 aa).

The protein belongs to the UPF0335 family.

This chain is UPF0335 protein M446_5200, found in Methylobacterium sp. (strain 4-46).